The primary structure comprises 137 residues: Large ribosomal subunit protein mL41 (137 aa).

A mitochondrion-targeting transit peptide spans 1–13 (MGVLAAAARCLVR).

Belongs to the mitochondrion-specific ribosomal protein mL41 family. As to quaternary structure, component of the mitochondrial large ribosomal subunit (mt-LSU). Mature mammalian 55S mitochondrial ribosomes consist of a small (28S) and a large (39S) subunit. The 28S small subunit contains a 12S ribosomal RNA (12S mt-rRNA) and 30 different proteins. The 39S large subunit contains a 16S rRNA (16S mt-rRNA), a copy of mitochondrial valine transfer RNA (mt-tRNA(Val)), which plays an integral structural role, and 52 different proteins. Interacts with BCL2. Present in kidney, liver, thymus and testis, and at lower level in brain and spleen (at protein level).

It localises to the mitochondrion. Functionally, component of the mitochondrial ribosome large subunit. Also involved in apoptosis and cell cycle. Enhances p53/TP53 stability, thereby contributing to p53/TP53-induced apoptosis in response to growth-inhibitory condition. Enhances p53/TP53 translocation to the mitochondria. Has the ability to arrest the cell cycle at the G1 phase, possibly by stabilizing the CDKN1A and CDKN1B (p27Kip1) proteins. The sequence is that of Large ribosomal subunit protein mL41 (MRPL41) from Homo sapiens (Human).